The following is a 1309-amino-acid chain: Target of rapamycin complex 2 subunit ste20 (1309 aa).

One can recognise an REM-1 domain in the interval 24-110 (DFIKKMNTTD…IESFQGENGE (87 aa)). A disordered region spans residues 105-128 (QGENGEAKTGSTSLTRSASATVSR). Positions 113–128 (TGSTSLTRSASATVSR) are enriched in polar residues. Ser151 is subject to Phosphoserine. The tract at residues 183-205 (NVNEKNNSSSEDTQPNGKRPSSL) is disordered. Residues 194–205 (DTQPNGKRPSSL) are compositionally biased toward polar residues. Transmembrane regions (helical) follow at residues 285–305 (LFLD…WILS), 392–412 (LIDG…LVYL), 504–524 (VIDL…ESFL), 564–584 (TAVL…VCMI), 926–946 (LNHW…LEVC), and 984–1004 (LLLR…INFI). Phosphothreonine is present on Thr1203.

This sequence belongs to the RICTOR family. The target of rapamycin complex 2 (TORC2) is composed of at least bit61, pop3/wat1, sin1, ste20 and tor1. Post-translationally, either Ser-203 or Ser-204 are phosphorylated as well.

It localises to the membrane. Its function is as follows. Component of TORC2, which regulates multiple cellular processes to control cell growth in response to environmental signals. TORC2 is required for cell survival under various stress conditions. TORC2 positively controls G1 cell-cycle arrest, sexual development and amino acid uptake. Positively regulates amino acid uptake through the control of expression of amino acid permeases. In Schizosaccharomyces pombe (strain 972 / ATCC 24843) (Fission yeast), this protein is Target of rapamycin complex 2 subunit ste20.